The following is a 757-amino-acid chain: Polymeric immunoglobulin receptor (757 aa).

The N-terminal stretch at 1–18 is a signal peptide; sequence MSRLFLACLLAIFPVVSM. In terms of domain architecture, Ig-like V-type 1; required for binding to polymeric IgA and IgM spans 19 to 126; it reads KSPIFGPEEV…RGLNFDVSLE (108 aa). Residues 19 to 632 lie on the Extracellular side of the membrane; that stretch reads KSPIFGPEEV…TGYSGSSKAL (614 aa). Disulfide bonds link C40–C110, C56–C64, C152–C220, C257–C324, C271–C279, C370–C440, and C384–C394. N83 is a glycosylation site (N-linked (GlcNAc...) asparagine). Ig-like V-type domains are found at residues 145-237, 250-341, 353-457, and 461-560; these read GRTV…DLQV, RSSV…VQAW, ASPS…LKVV, and PSLK…VYVA. 2 N-linked (GlcNAc...) asparagine glycosylation sites follow: N420 and N468. 3 disulfides stabilise this stretch: C481/C543, C485/C519, and C495/C502. Residues 607–627 are disordered; the sequence is KDAAGGPGAPADPGRPTGYSG. A helical transmembrane segment spans residues 633–653; the sequence is VSTLVPLALVLVAGVVAIGVV. The Cytoplasmic portion of the chain corresponds to 654 to 757; that stretch reads RARHRKNVDR…AATQNGPTEA (104 aa). A phosphoserine mark is found at S665, S674, S681, and S727. Residues 679–688 are compositionally biased toward basic and acidic residues; the sequence is ENSRDFEGRD. The disordered stretch occupies residues 679–730; sequence ENSRDFEGRDNMGASPEAQETSLGGKDEFATTTEDTVESKEPKKAKRSSKEE.

In terms of assembly, interacts (mainly via CDR1-like domain) with dimeric IgA. Interacts (mainly via CDR2-like domain) with pentameric IgM. As to quaternary structure, either free or part of the secretory IgA (sIgA) complex that consists of two, four or five IgA monomers, and two additional non-Ig polypeptides, namely the JCHAIN and the secretory component (the proteolytic product of PIGR). Free secretory component interacts with bacterial antigens toxA of C.difficile and eae of E.coli. Post-translationally, in the absence of dimeric IgA, Ser-727 is phosphorylated which allows PIGR to function normally. N-glycosylated. N-glycosylation is required for anchoring IgA molecules to mucus, but is not necessary for Ig binding. In terms of tissue distribution, found in mammary gland, jejunum, lung, kidney and small intestine.

The protein resides in the cell membrane. It localises to the secreted. In terms of biological role, mediates selective transcytosis of polymeric IgA and IgM across mucosal epithelial cells. Binds polymeric IgA and IgM at the basolateral surface of epithelial cells. The complex is then transported across the cell to be secreted at the apical surface. During this process, a cleavage occurs that separates the extracellular (known as the secretory component) from the transmembrane segment. Its function is as follows. Through its N-linked glycans ensures anchoring of secretory IgA (sIgA) molecules to mucus lining the epithelial surface to neutralize extracellular pathogens. On its own (free form) may act as a non-specific microbial scavenger to prevent pathogen interaction with epithelial cells. The chain is Polymeric immunoglobulin receptor (PIGR) from Bos taurus (Bovine).